Consider the following 366-residue polypeptide: Actin-like protein 8 (366 aa).

Belongs to the actin family. As to expression, strongly expressed in testis and pancreas. Weak expression in placenta.

The protein resides in the cytoplasm. It localises to the cytoskeleton. This chain is Actin-like protein 8 (ACTL8), found in Homo sapiens (Human).